A 436-amino-acid polypeptide reads, in one-letter code: 3-ketoacyl-CoA thiolase (436 aa).

Residue cysteine 99 is the Acyl-thioester intermediate of the active site. Catalysis depends on proton acceptor residues histidine 392 and cysteine 422.

The protein belongs to the thiolase-like superfamily. Thiolase family. As to quaternary structure, heterotetramer of two alpha chains (FadJ) and two beta chains (FadI).

The protein resides in the cytoplasm. It carries out the reaction an acyl-CoA + acetyl-CoA = a 3-oxoacyl-CoA + CoA. It functions in the pathway lipid metabolism; fatty acid beta-oxidation. Its function is as follows. Catalyzes the final step of fatty acid oxidation in which acetyl-CoA is released and the CoA ester of a fatty acid two carbons shorter is formed. The polypeptide is 3-ketoacyl-CoA thiolase (Salmonella paratyphi A (strain AKU_12601)).